The following is a 414-amino-acid chain: Paired box protein Pax-2 (414 aa).

A DNA-binding region (paired) is located at residues 15–141 (RHGGVNQLGG…SSINRIIRTK (127 aa)). Positions 18–74 (GVNQLGGVFVNGRPLPDVVRQRIVELAHQGVRPCDISRQLRVSHGCVSKILGRYYET) are PAI subdomain. Residues 93-141 (KVVDKIAEYKRQNPTMFAWEIRDRLLAEGICDNDTVPSVSSINRIIRTK) are RED subdomain. T225 bears the Phosphothreonine mark.

In terms of assembly, interacts with ELGN3; the interaction targets PAX2 for destruction. Interacts with TLE4. Kidney and nephrogenic rests.

Its subcellular location is the nucleus. In terms of biological role, transcription factor that may have a role in kidney cell differentiation. The protein is Paired box protein Pax-2 (Pax2) of Mus musculus (Mouse).